Here is a 432-residue protein sequence, read N- to C-terminus: Serine--tRNA ligase (432 aa).

An L-serine-binding site is contributed by threonine 230–glutamate 232. Arginine 261–glutamate 263 lines the ATP pocket. Glutamate 284 contributes to the L-serine binding site. Glutamate 348 to serine 351 contacts ATP. Serine 383 is an L-serine binding site.

This sequence belongs to the class-II aminoacyl-tRNA synthetase family. Type-1 seryl-tRNA synthetase subfamily. In terms of assembly, homodimer. The tRNA molecule binds across the dimer.

The protein localises to the cytoplasm. The enzyme catalyses tRNA(Ser) + L-serine + ATP = L-seryl-tRNA(Ser) + AMP + diphosphate + H(+). It catalyses the reaction tRNA(Sec) + L-serine + ATP = L-seryl-tRNA(Sec) + AMP + diphosphate + H(+). It functions in the pathway aminoacyl-tRNA biosynthesis; selenocysteinyl-tRNA(Sec) biosynthesis; L-seryl-tRNA(Sec) from L-serine and tRNA(Sec): step 1/1. In terms of biological role, catalyzes the attachment of serine to tRNA(Ser). Is also able to aminoacylate tRNA(Sec) with serine, to form the misacylated tRNA L-seryl-tRNA(Sec), which will be further converted into selenocysteinyl-tRNA(Sec). The sequence is that of Serine--tRNA ligase from Limosilactobacillus fermentum (strain NBRC 3956 / LMG 18251) (Lactobacillus fermentum).